Here is a 502-residue protein sequence, read N- to C-terminus: Serine/threonine-protein kinase SKS1 (502 aa).

A Protein kinase domain is found at 10–338; the sequence is FRITAQIGSG…SEVSSLTSFT (329 aa). ATP is bound by residues 16–24 and K39; that span reads IGSGAYGLV. D186 functions as the Proton acceptor in the catalytic mechanism. Low complexity-rich tracts occupy residues 376–391 and 399–410; these read QEQQ…QVQE and EQIQNQEQAQQQ. Residues 376-439 form a disordered region; it reads QEQQQQQQQQ…GSMEKYEYTN (64 aa). The segment covering 411–420 has biased composition (acidic residues); the sequence is QEEEDAEPES.

This sequence belongs to the protein kinase superfamily. Ser/Thr protein kinase family.

It carries out the reaction L-seryl-[protein] + ATP = O-phospho-L-seryl-[protein] + ADP + H(+). It catalyses the reaction L-threonyl-[protein] + ATP = O-phospho-L-threonyl-[protein] + ADP + H(+). Its function is as follows. May have a role in glucose regulation. The sequence is that of Serine/threonine-protein kinase SKS1 (SKS1) from Saccharomyces cerevisiae (strain ATCC 204508 / S288c) (Baker's yeast).